Consider the following 144-residue polypeptide: Superoxide dismutase [Mn], mitochondrial (144 aa).

Residues His-10, His-58, and Asp-143 each contribute to the Mn(2+) site.

The protein belongs to the iron/manganese superoxide dismutase family. Homotetramer. Requires Mn(2+) as cofactor.

Its subcellular location is the mitochondrion matrix. It catalyses the reaction 2 superoxide + 2 H(+) = H2O2 + O2. In terms of biological role, destroys superoxide anion radicals which are normally produced within the cells and which are toxic to biological systems. The sequence is that of Superoxide dismutase [Mn], mitochondrial from Petromyzon marinus (Sea lamprey).